Reading from the N-terminus, the 380-residue chain is 3-isopropylmalate dehydratase large subunit (380 aa).

Positions 262, 320, and 323 each coordinate [4Fe-4S] cluster.

It belongs to the aconitase/IPM isomerase family. LeuC type 2 subfamily. Heterodimer of LeuC and LeuD. [4Fe-4S] cluster is required as a cofactor.

It carries out the reaction (2R,3S)-3-isopropylmalate = (2S)-2-isopropylmalate. It participates in amino-acid biosynthesis; L-leucine biosynthesis; L-leucine from 3-methyl-2-oxobutanoate: step 2/4. In terms of biological role, catalyzes the isomerization between 2-isopropylmalate and 3-isopropylmalate, via the formation of 2-isopropylmaleate. This chain is 3-isopropylmalate dehydratase large subunit, found in Pyrococcus horikoshii (strain ATCC 700860 / DSM 12428 / JCM 9974 / NBRC 100139 / OT-3).